The following is a 375-amino-acid chain: 23S rRNA (uracil(747)-C(5))-methyltransferase RlmC (375 aa).

Residues Cys-3, Cys-11, Cys-14, and Cys-87 each coordinate [4Fe-4S] cluster. The S-adenosyl-L-methionine site is built by Gln-212, Phe-241, Glu-262, and Asn-307. Cys-334 (nucleophile) is an active-site residue.

Belongs to the class I-like SAM-binding methyltransferase superfamily. RNA M5U methyltransferase family. RlmC subfamily.

It carries out the reaction uridine(747) in 23S rRNA + S-adenosyl-L-methionine = 5-methyluridine(747) in 23S rRNA + S-adenosyl-L-homocysteine + H(+). Catalyzes the formation of 5-methyl-uridine at position 747 (m5U747) in 23S rRNA. The polypeptide is 23S rRNA (uracil(747)-C(5))-methyltransferase RlmC (Pectobacterium atrosepticum (strain SCRI 1043 / ATCC BAA-672) (Erwinia carotovora subsp. atroseptica)).